The primary structure comprises 574 residues: Membrane protein insertase YidC (574 aa).

6 consecutive transmembrane segments (helical) span residues 6-26 (VFLI…WGKE), 350-370 (VIDY…FWVL), 376-396 (FLHN…LVLY), 447-467 (GGCL…WVLV), 491-511 (FILP…TPTP), and 525-545 (PLVF…YWVV).

It belongs to the OXA1/ALB3/YidC family. Type 1 subfamily. In terms of assembly, interacts with the Sec translocase complex via SecD. Specifically interacts with transmembrane segments of nascent integral membrane proteins during membrane integration.

It is found in the cell inner membrane. Functionally, required for the insertion and/or proper folding and/or complex formation of integral membrane proteins into the membrane. Involved in integration of membrane proteins that insert both dependently and independently of the Sec translocase complex, as well as at least some lipoproteins. Aids folding of multispanning membrane proteins. The polypeptide is Membrane protein insertase YidC (Xanthomonas oryzae pv. oryzae (strain KACC10331 / KXO85)).